We begin with the raw amino-acid sequence, 396 residues long: Ribosomal RNA large subunit methyltransferase I (396 aa).

In terms of domain architecture, PUA spans 2–81 (TVRLILAKGR…ESIDIDFFVR (80 aa)).

Belongs to the methyltransferase superfamily. RlmI family.

Its subcellular location is the cytoplasm. It carries out the reaction cytidine(1962) in 23S rRNA + S-adenosyl-L-methionine = 5-methylcytidine(1962) in 23S rRNA + S-adenosyl-L-homocysteine + H(+). Functionally, specifically methylates the cytosine at position 1962 (m5C1962) of 23S rRNA. The polypeptide is Ribosomal RNA large subunit methyltransferase I (Erwinia tasmaniensis (strain DSM 17950 / CFBP 7177 / CIP 109463 / NCPPB 4357 / Et1/99)).